The primary structure comprises 82 residues: Large ribosomal subunit protein uL24c (82 aa).

It belongs to the universal ribosomal protein uL24 family. Part of the 50S ribosomal subunit.

It localises to the plastid. The protein resides in the chloroplast. One of two assembly initiator proteins, it binds directly to the 5'-end of the 23S rRNA, where it nucleates assembly of the 50S subunit. In Phaeodactylum tricornutum (strain CCAP 1055/1), this protein is Large ribosomal subunit protein uL24c (rpl24).